The chain runs to 218 residues: Adenylate kinase (218 aa).

G10–T15 is a binding site for ATP. Positions S30 to V59 are NMP. Residues T31, R36, G57–V59, G85–R88, and Q92 contribute to the AMP site. Residues G122–D159 form an LID region. ATP-binding positions include R123 and V132–Y133. Residues R156 and R167 each contribute to the AMP site. G203 lines the ATP pocket.

This sequence belongs to the adenylate kinase family. As to quaternary structure, monomer.

It is found in the cytoplasm. The catalysed reaction is AMP + ATP = 2 ADP. It participates in purine metabolism; AMP biosynthesis via salvage pathway; AMP from ADP: step 1/1. Functionally, catalyzes the reversible transfer of the terminal phosphate group between ATP and AMP. Plays an important role in cellular energy homeostasis and in adenine nucleotide metabolism. The chain is Adenylate kinase from Legionella pneumophila (strain Lens).